Here is a 75-residue protein sequence, read N- to C-terminus: CDC42 small effector protein 2-B (75 aa).

2 S-palmitoyl cysteine lipidation sites follow: Cys-10 and Cys-11. One can recognise a CRIB domain in the interval Ile-29 to Gly-42.

The protein belongs to the CDC42SE/SPEC family.

The protein resides in the cytoplasm. Its subcellular location is the cytoskeleton. The protein localises to the cell membrane. Its function is as follows. Probably involved in the organization of the actin cytoskeleton by acting downstream of CDC42, inducing actin filament assembly. The chain is CDC42 small effector protein 2-B (cdc42se2-b) from Xenopus laevis (African clawed frog).